The chain runs to 352 residues: GTPase Obg (352 aa).

Positions 1–159 (MHFLDQAKIY…MWVWLRLKLL (159 aa)) constitute an Obg domain. Residues 160–327 (ADVGLLGLPN…LLDAVLGYLP (168 aa)) form the OBG-type G domain. GTP contacts are provided by residues 166–173 (GLPNAGKS), 191–195 (FTTLV), 212–215 (DIPG), 279–282 (NKLD), and 308–310 (SGA). Residues S173 and T193 each coordinate Mg(2+). The disordered stretch occupies residues 329–352 (STSTETKGSEVEEVDEEGGEWSPI). Acidic residues predominate over residues 339–352 (VEEVDEEGGEWSPI).

The protein belongs to the TRAFAC class OBG-HflX-like GTPase superfamily. OBG GTPase family. In terms of assembly, monomer. Mg(2+) serves as cofactor.

It is found in the cytoplasm. An essential GTPase which binds GTP, GDP and possibly (p)ppGpp with moderate affinity, with high nucleotide exchange rates and a fairly low GTP hydrolysis rate. Plays a role in control of the cell cycle, stress response, ribosome biogenesis and in those bacteria that undergo differentiation, in morphogenesis control. This chain is GTPase Obg, found in Erythrobacter litoralis (strain HTCC2594).